The chain runs to 917 residues: GTPase-activating Rap/Ran-GAP domain-like protein 3 (917 aa).

Residues Leu185 to Leu401 form the Rap-GAP domain. One can recognise a CNH domain in the interval Pro483–Tyr792.

It belongs to the GARNL3 family.

This Gallus gallus (Chicken) protein is GTPase-activating Rap/Ran-GAP domain-like protein 3 (GARNL3).